The chain runs to 368 residues: tRNA(Met) cytidine acetate ligase (368 aa).

Residues 7–20, glycine 96, asparagine 152, and arginine 175 contribute to the ATP site; that span reads IAEF…HKYL.

Belongs to the TmcAL family.

The protein resides in the cytoplasm. It catalyses the reaction cytidine(34) in elongator tRNA(Met) + acetate + ATP = N(4)-acetylcytidine(34) in elongator tRNA(Met) + AMP + diphosphate. Catalyzes the formation of N(4)-acetylcytidine (ac(4)C) at the wobble position of elongator tRNA(Met), using acetate and ATP as substrates. First activates an acetate ion to form acetyladenylate (Ac-AMP) and then transfers the acetyl group to tRNA to form ac(4)C34. This Streptococcus pyogenes serotype M1 protein is tRNA(Met) cytidine acetate ligase.